A 359-amino-acid chain; its full sequence is 4-galactosyl-N-acetylglucosaminide 3-alpha-L-fucosyltransferase 9 (359 aa).

At 1 to 11 (MTSTSKGILRP) the chain is on the cytoplasmic side. Residues 12-32 (FLIVCVILACFMACLLIYIKP) form a helical; Signal-anchor for type II membrane protein membrane-spanning segment. Over 33–359 (TNSWVFSPME…VGNLEKWFWN (327 aa)) the chain is Lumenal. Asparagine 62 is a glycosylation site (N-linked (GlcNAc...) asparagine). The interval 63 to 168 (ETTILVWVWP…RRDSDIQVPY (106 aa)) is acceptor-binding. Position 75 (glutamine 75) interacts with a beta-D-galactosyl-(1-&gt;4)-N-acetyl-beta-D-glucosaminyl derivative. Cystine bridges form between cysteine 82/cysteine 335, cysteine 91/cysteine 338, and cysteine 190/cysteine 238. N-linked (GlcNAc...) asparagine glycosylation is present at asparagine 101. Glutamate 137 is a binding site for a beta-D-galactosyl-(1-&gt;4)-N-acetyl-beta-D-glucosaminyl derivative. The active-site Nucleophile is glutamate 137. A GDP-beta-L-fucose-binding site is contributed by glutamate 137. Asparagine 153 carries N-linked (GlcNAc...) asparagine glycosylation. Residues tyrosine 168, valine 192, serine 194, asparagine 195, arginine 202, valine 226, tyrosine 241, asparagine 246, tyrosine 252, glutamate 255, and lysine 256 each contribute to the GDP-beta-L-fucose site. Positions 169-326 (GFLTVSTNPF…NWRKDFTVNL (158 aa)) are donor-binding. Residues 327 to 359 (PRFWESHACLACDHVKRHQEYKSVGNLEKWFWN) form an acceptor-binding region.

Belongs to the glycosyltransferase 10 family. Homodimer. In terms of processing, N-glycosylated with complex-type N-glycans.

It is found in the golgi apparatus. The protein resides in the trans-Golgi network membrane. It localises to the golgi apparatus membrane. It carries out the reaction a beta-D-galactosyl-(1-&gt;4)-N-acetyl-beta-D-glucosaminyl derivative + GDP-beta-L-fucose = a beta-D-galactosyl-(1-&gt;4)-[alpha-L-fucosyl-(1-&gt;3)]-N-acetyl-beta-D-glucosaminyl derivative + GDP + H(+). The catalysed reaction is an alpha-Neu5Ac-(2-&gt;3)-beta-D-Gal-(1-&gt;4)-beta-D-GlcNAc-(1-&gt;3)-beta-D-Gal-(1-&gt;4)-beta-D-GlcNAc derivative + GDP-beta-L-fucose = an alpha-Neu5Ac-(2-&gt;3)-beta-D-Gal-(1-&gt;4)-beta-D-GlcNAc-(1-&gt;3)-beta-D-Gal-(1-&gt;4)-[alpha-L-Fuc-(1-&gt;3)]-beta-D-GlcNAc derivative + GDP + H(+). The enzyme catalyses alpha-N-glycoloylneuraminosyl-(2-&gt;3)-beta-D-galactosyl-(1-&gt;4)-N-acetyl-beta-D-glucosaminyl-(1-&gt;3)-beta-D-galactosyl-(1-&gt;4)-N-acetyl-beta-D-glucosaminyl-(1-&gt;3)-beta-D-galactosyl-(1-&gt;4)-beta-D-glucosyl-(1&lt;-&gt;1')-ceramide + GDP-beta-L-fucose = alpha-N-glycoloylneuraminosyl-(2-&gt;3)-beta-D-galactosyl-(1-&gt;4)-N-acetyl-beta-D-glucosaminyl-(1-&gt;3)-beta-D-galactosyl-(1-&gt;4)-[alpha-L-fucosyl-(1-&gt;3)]-N-acetyl-beta-D-glucosaminyl-(1-&gt;3)-beta-D-galactosyl-(1-&gt;4)-beta-D-glucosyl-(1&lt;-&gt;1')-ceramide + GDP + H(+). It catalyses the reaction alpha-D-galactosyl-(1-&gt;3)-beta-D-galactosyl-(1-&gt;4)-N-acetyl-beta-D-glucosaminyl-(1-&gt;3)-beta-D-galactosyl-(1-&gt;4)-beta-D-glucosyl-(1&lt;-&gt;1')-ceramide + GDP-beta-L-fucose = a neolactoside IV(3)-alpha-Gal,III(3)-alpha-Fuc-nLc4Cer + GDP + H(+). It carries out the reaction a neolactoside nLc4Cer + GDP-beta-L-fucose = a neolactoside III(3)-alpha-Fuc-nLc4Cer + GDP + H(+). The catalysed reaction is an N-acetyl-alpha-neuraminyl-(2-&gt;3)-beta-D-galactosyl-(1-&gt;4)-N-acetyl-beta-D-glucosaminyl derivative + GDP-beta-L-fucose = an alpha-Neu5Ac-(2-&gt;3)-beta-D-Gal-(1-&gt;4)-[alpha-L-Fuc-(1-&gt;3)]-beta-D-GlcNAc derivative + GDP + H(+). The enzyme catalyses beta-D-Gal-(1-&gt;4)-beta-D-GlcNAc-(1-&gt;3)-beta-D-Gal-(1-&gt;4)-D-Glc + GDP-beta-L-fucose = beta-D-Gal-(1-&gt;4)-[alpha-L-Fuc-(1-&gt;3)]-beta-D-GlcNAc-(1-&gt;3)-beta-D-Gal-(1-&gt;4)-D-Glc + GDP + H(+). It catalyses the reaction an alpha-L-Fuc-(1-&gt;2)-beta-D-Gal-(1-&gt;4)-beta-D-GlcNAc derivative + GDP-beta-L-fucose = an alpha-L-Fuc-(1-&gt;2)-beta-D-Gal-(1-&gt;4)-[alpha-L-Fuc-(1-&gt;3)]-beta-D-GlcNAc derivative + GDP + H(+). It participates in protein modification; protein glycosylation. The protein operates within glycolipid biosynthesis. Its activity is regulated as follows. Activated by Mn2+. Functionally, catalyzes alpha(1-&gt;3) linkage of fucosyl moiety transferred from GDP-beta-L-fucose to N-acetyl glucosamine (GlcNAc) within type 2 lactosamine (LacNAc, beta-D-Gal-(1-&gt;4)-beta-D-GlcNAc-) glycan attached to glycolipids and N- or O-linked glycoproteins. Fucosylates distal type 2 LacNAc and its fucosylated (H-type 2 LacNAc) and sialylated (sialyl-type 2 LacNAc) derivatives to form Lewis x (Lex) (CD15) and Lewis y (Ley) antigenic epitopes involved in cell adhesion and differentiation. Generates Lex epitopes in the brain, presumably playing a role in the maintenance of neuronal stemness and neurite outgrowth in progenitor neural cells. Fucosylates the internal type 2 LacNAc unit of the polylactosamine chain to form VIM-2 antigen that serves as recognition epitope for SELE. Can also modify milk oligosaccharides in particular type 2 tetrasaccharide LNnT. The polypeptide is 4-galactosyl-N-acetylglucosaminide 3-alpha-L-fucosyltransferase 9 (Cricetulus griseus (Chinese hamster)).